The primary structure comprises 781 residues: Mitochondrial inner membrane m-AAA protease component paraplegin (781 aa).

The transit peptide at 1–43 (MAAALLLLRGLRPGPEPRPRRLWGLLSGRGPGLSSGAGARRPY) directs the protein to the mitochondrion. 2 disordered regions span residues 22–56 (LWGL…AAAG) and 103–135 (TSRM…ERED). Residues 36–56 (GAGARRPYAARGTPVGPAAAG) are compositionally biased toward low complexity. Residues 44-105 (AARGTPVGPA…GSTLYFNTSR (62 aa)) constitute a propeptide, removed in mature form. Residues 106–144 (MKQKNKDNDKPKGKTPEDDEEEKRRKEREDQMYRERLRT) lie on the Mitochondrial matrix side of the membrane. The segment covering 109–135 (KNKDNDKPKGKTPEDDEEEKRRKERED) has biased composition (basic and acidic residues). The chain crosses the membrane as a helical span at residues 145–165 (LFIIALVMSLLNSLSTSGGSI). The Mitochondrial intermembrane segment spans residues 166-248 (SWADFVNEML…DRIPVSYKRT (83 aa)). Residues 249–269 (GFFGNALYALGMTAVGLAILW) traverse the membrane as a helical segment. The Mitochondrial matrix portion of the chain corresponds to 270–781 (YVFRLAGMTG…ASGEEEAPAP (512 aa)). The ATP site is built by alanine 312, glycine 352, cysteine 353, glycine 354, lysine 355, threonine 356, and leucine 357. The residue at position 505 (tyrosine 505) is a 3'-nitrotyrosine. Zn(2+) is bound at residue histidine 574. Residue glutamate 575 is part of the active site. Residues histidine 578 and aspartate 650 each coordinate Zn(2+). The interaction with PPIF stretch occupies residues 701 to 781 (HEAKLLVAKA…ASGEEEAPAP (81 aa)).

The protein in the N-terminal section; belongs to the AAA ATPase family. It in the C-terminal section; belongs to the peptidase M41 family. As to quaternary structure, forms heterohexamers with SPG7 and AFG3L1. The m-AAA protease is either composed of homohexamers of AFG3L2 or heterohexamers of AFG3L1, AFG3L2 and/or SPG7. Component of the mitochondrial permeability transition pore complex (mPTPC), at least composed of SPG7, VDAC1 and PPIF. Interacts with MAIP1. Requires Zn(2+) as cofactor. In terms of processing, upon import into the mitochondrion, the N-terminal transit peptide is cleaved by the mitochondrial-processing peptidase (MPP) to generate an intermediate form which undergoes a second proteolytic cleavage mediated by proteases AFG3L1 and/or AFG3L2 removing an additional N-terminal fragment to generate the proteolytically active mature form. As to expression, expressed in the brain and retina (at protein level).

The protein localises to the mitochondrion inner membrane. The catalysed reaction is ATP + H2O = ADP + phosphate + H(+). In terms of biological role, catalytic component of the m-AAA protease, a protease that plays a key role in proteostasis of inner mitochondrial membrane proteins, and which is essential for axonal and neuron development. SPG7 possesses both ATPase and protease activities: the ATPase activity is required to unfold substrates, threading them into the internal proteolytic cavity for hydrolysis into small peptide fragments. The m-AAA protease exerts a dual role in the mitochondrial inner membrane: it mediates the processing of specific regulatory proteins and ensures protein quality control by degrading misfolded polypeptides. Mediates protein maturation of the mitochondrial ribosomal subunit MRPL32/bL32m by catalyzing the cleavage of the presequence of MRPL32/bL32m prior to assembly into the mitochondrial ribosome. Acts as a regulator of calcium in neurons by mediating degradation of SMDT1/EMRE before its assembly with the uniporter complex, limiting the availability of SMDT1/EMRE for MCU assembly and promoting efficient assembly of gatekeeper subunits with MCU. Also regulates mitochondrial calcium by catalyzing degradation of MCU. Plays a role in the formation and regulation of the mitochondrial permeability transition pore (mPTP) and its proteolytic activity is dispensable for this function. In Mus musculus (Mouse), this protein is Mitochondrial inner membrane m-AAA protease component paraplegin.